Consider the following 293-residue polypeptide: Tyrosine recombinase XerD (293 aa).

The region spanning 1-83 is the Core-binding (CB) domain; sequence MHGLIADFIH…ALRKFYRFLL (83 aa). Residues 104 to 287 enclose the Tyr recombinase domain; that stretch reads HLPATLSGTE…SNQHLVAVYH (184 aa). Active-site residues include arginine 144, lysine 168, histidine 239, arginine 242, and histidine 265. Tyrosine 274 functions as the O-(3'-phospho-DNA)-tyrosine intermediate in the catalytic mechanism.

The protein belongs to the 'phage' integrase family. XerD subfamily. As to quaternary structure, forms a cyclic heterotetrameric complex composed of two molecules of XerC and two molecules of XerD.

The protein localises to the cytoplasm. Functionally, site-specific tyrosine recombinase, which acts by catalyzing the cutting and rejoining of the recombining DNA molecules. The XerC-XerD complex is essential to convert dimers of the bacterial chromosome into monomers to permit their segregation at cell division. It also contributes to the segregational stability of plasmids. This is Tyrosine recombinase XerD from Lacticaseibacillus casei (Lactobacillus casei).